The following is a 206-amino-acid chain: LexA repressor (206 aa).

A DNA-binding region (H-T-H motif) is located at residues 28–48; that stretch reads RAEIARELGFRSANAAEEHLK. Active-site for autocatalytic cleavage activity residues include Ser123 and Lys160.

The protein belongs to the peptidase S24 family. Homodimer.

The catalysed reaction is Hydrolysis of Ala-|-Gly bond in repressor LexA.. Its function is as follows. Represses a number of genes involved in the response to DNA damage (SOS response), including recA and lexA. In the presence of single-stranded DNA, RecA interacts with LexA causing an autocatalytic cleavage which disrupts the DNA-binding part of LexA, leading to derepression of the SOS regulon and eventually DNA repair. The protein is LexA repressor of Vibrio campbellii (strain ATCC BAA-1116).